A 470-amino-acid chain; its full sequence is MTLSSGEPSAVGGRHRVVIIGSGFGGLNAAKALKRADVDITLISKTTTHLFQPLLYQVATGILSEGDIAPTTRLILRRQKNVRVLLGEVNAIDLKAQTVTSKLMDMTTVTPYDSLIVAAGAQQSYFGNDEFATFAPGMKTIDDALELRGRILGAFEAAEVSTDHAERERRLTFVVVGAGPTGVEVAGQIVELAERTLAGAFRTITPSECRVILLDAAPAVLPPMGPKLGLKAQRRLEKMDVEVQLNAMVTAVDYKGITIKEKDGGERRIECACKVWAAGVAASPLGKMIAEGSDGTEIDRAGRVIVEPDLTVKGHPNVFVVGDLMFVPGVPGVAQGAIQGARYATTVIKHMVKGNDDPANRKPFHYFNKGSMATISRHSAVAQVGKLEFAGYFAWLAWLVLHLVYLVGYRNRIAALFAWGISFMGRARGQMAITSQMIYARLVMTLMEQQAQGALAAAEQAEHAEQEAAG.

Residues 21–25 and Val89 each bind FAD; that span reads GSGFG. The active site involves Glu184. FAD contacts are provided by residues Asp323 and 334–335; that span reads AQ. The chain crosses the membrane as a helical span at residues 389-409; that stretch reads FAGYFAWLAWLVLHLVYLVGY.

The protein belongs to the NADH dehydrogenase family. Requires FAD as cofactor.

The protein resides in the cell inner membrane. It catalyses the reaction a quinone + NADH + H(+) = a quinol + NAD(+). It carries out the reaction a menaquinone + NADH + H(+) = a menaquinol + NAD(+). Inhibited by phenothiazine analogs. Functionally, alternative, nonproton pumping NADH:quinone oxidoreductase that delivers electrons to the respiratory chain by oxidation of NADH and reduction of quinones. The chain is Type II NADH:quinone oxidoreductase NdhA from Mycobacterium tuberculosis (strain ATCC 25618 / H37Rv).